Reading from the N-terminus, the 124-residue chain is Ribonuclease pancreatic (124 aa).

Lysine 7 and arginine 10 together coordinate substrate. Histidine 12 acts as the Proton acceptor in catalysis. 4 disulfide bridges follow: cysteine 26–cysteine 84, cysteine 40–cysteine 95, cysteine 58–cysteine 110, and cysteine 65–cysteine 72. An N-linked (GlcNAc...) asparagine; partial glycan is attached at asparagine 34. Substrate-binding positions include 41–45 (KPVBT), lysine 66, and arginine 85. Catalysis depends on histidine 119, which acts as the Proton donor.

Belongs to the pancreatic ribonuclease family. Monomer. Interacts with and forms tight 1:1 complexes with RNH1. Dimerization of two such complexes may occur. Interaction with RNH1 inhibits this protein. As to expression, pancreas.

The protein localises to the secreted. The enzyme catalyses an [RNA] containing cytidine + H2O = an [RNA]-3'-cytidine-3'-phosphate + a 5'-hydroxy-ribonucleotide-3'-[RNA].. It catalyses the reaction an [RNA] containing uridine + H2O = an [RNA]-3'-uridine-3'-phosphate + a 5'-hydroxy-ribonucleotide-3'-[RNA].. Endonuclease that catalyzes the cleavage of RNA on the 3' side of pyrimidine nucleotides. Acts on single-stranded and double-stranded RNA. The polypeptide is Ribonuclease pancreatic (RNASE1) (Damaliscus korrigum (Topi)).